The primary structure comprises 272 residues: Endoplasmic reticulum resident protein 27 (272 aa).

The signal sequence occupies residues 1–25 (MEAMPSRCLFLLFLSTCKLSPEVVA). A Thioredoxin domain is found at 38–151 (EPMRLTDVQA…LVTEYNAITA (114 aa)). The N-linked (GlcNAc...) asparagine glycan is linked to N99. A PDIA3-binding site region spans residues 229–232 (DKWD). A Prevents secretion from ER motif is present at residues 269–272 (KVEL).

It belongs to the protein disulfide isomerase family. As to quaternary structure, interacts with PDIA3.

The protein resides in the endoplasmic reticulum lumen. In terms of biological role, specifically binds unfolded proteins and may recruit protein disulfide isomerase PDIA3 to unfolded substrates. Binds protein substrates via a hydrophobic pocket in the C-terminal domain. May play a role in the unfolded stress response. The chain is Endoplasmic reticulum resident protein 27 (ERP27) from Bos taurus (Bovine).